The sequence spans 103 residues: Large ribosomal subunit protein bL21 (103 aa).

The protein belongs to the bacterial ribosomal protein bL21 family. As to quaternary structure, part of the 50S ribosomal subunit. Contacts protein L20.

Its function is as follows. This protein binds to 23S rRNA in the presence of protein L20. This chain is Large ribosomal subunit protein bL21, found in Azotobacter vinelandii (strain DJ / ATCC BAA-1303).